Consider the following 495-residue polypeptide: Probable cytosol aminopeptidase (495 aa).

Residues Lys-261 and Asp-266 each coordinate Mn(2+). Lys-273 is an active-site residue. Mn(2+) is bound by residues Asp-284, Asp-343, and Glu-345. Arg-347 is a catalytic residue.

Belongs to the peptidase M17 family. The cofactor is Mn(2+).

The protein resides in the cytoplasm. It catalyses the reaction Release of an N-terminal amino acid, Xaa-|-Yaa-, in which Xaa is preferably Leu, but may be other amino acids including Pro although not Arg or Lys, and Yaa may be Pro. Amino acid amides and methyl esters are also readily hydrolyzed, but rates on arylamides are exceedingly low.. The catalysed reaction is Release of an N-terminal amino acid, preferentially leucine, but not glutamic or aspartic acids.. Presumably involved in the processing and regular turnover of intracellular proteins. Catalyzes the removal of unsubstituted N-terminal amino acids from various peptides. The chain is Probable cytosol aminopeptidase from Chelativorans sp. (strain BNC1).